A 403-amino-acid polypeptide reads, in one-letter code: S-adenosylmethionine synthase (403 aa).

Histidine 16 is a binding site for ATP. Aspartate 18 is a Mg(2+) binding site. Residue glutamate 44 participates in K(+) binding. L-methionine contacts are provided by glutamate 57 and glutamine 100. Positions 100–110 are flexible loop; the sequence is QSPDIAQGVDR. The segment at 106–126 is disordered; the sequence is QGVDRSYESRSGSASTDAHDL. ATP contacts are provided by residues 176–178, 248–249, aspartate 257, 263–264, alanine 280, and lysine 284; these read DGK, KF, and RK. Residue aspartate 257 participates in L-methionine binding. Lysine 288 serves as a coordination point for L-methionine.

Belongs to the AdoMet synthase family. Homotetramer; dimer of dimers. Mg(2+) is required as a cofactor. It depends on K(+) as a cofactor.

The protein resides in the cytoplasm. It catalyses the reaction L-methionine + ATP + H2O = S-adenosyl-L-methionine + phosphate + diphosphate. It functions in the pathway amino-acid biosynthesis; S-adenosyl-L-methionine biosynthesis; S-adenosyl-L-methionine from L-methionine: step 1/1. Functionally, catalyzes the formation of S-adenosylmethionine (AdoMet) from methionine and ATP. The overall synthetic reaction is composed of two sequential steps, AdoMet formation and the subsequent tripolyphosphate hydrolysis which occurs prior to release of AdoMet from the enzyme. The sequence is that of S-adenosylmethionine synthase from Clavibacter michiganensis subsp. michiganensis (strain NCPPB 382).